The following is a 75-amino-acid chain: Sec-independent protein translocase protein TatA (75 aa).

Residues methionine 1–glycine 21 form a helical membrane-spanning segment. The segment at lysine 44 to serine 75 is disordered.

Belongs to the TatA/E family. The Tat system comprises two distinct complexes: a TatABC complex, containing multiple copies of TatA, TatB and TatC subunits, and a separate TatA complex, containing only TatA subunits. Substrates initially bind to the TatABC complex, which probably triggers association of the separate TatA complex to form the active translocon.

The protein localises to the cell inner membrane. In terms of biological role, part of the twin-arginine translocation (Tat) system that transports large folded proteins containing a characteristic twin-arginine motif in their signal peptide across membranes. TatA could form the protein-conducting channel of the Tat system. This is Sec-independent protein translocase protein TatA from Bordetella petrii (strain ATCC BAA-461 / DSM 12804 / CCUG 43448).